Here is a 156-residue protein sequence, read N- to C-terminus: Small ribosomal subunit protein uS7 (156 aa).

It belongs to the universal ribosomal protein uS7 family. Part of the 30S ribosomal subunit. Contacts proteins S9 and S11.

Functionally, one of the primary rRNA binding proteins, it binds directly to 16S rRNA where it nucleates assembly of the head domain of the 30S subunit. Is located at the subunit interface close to the decoding center, probably blocks exit of the E-site tRNA. This chain is Small ribosomal subunit protein uS7, found in Geobacter sp. (strain M21).